A 184-amino-acid chain; its full sequence is dITP/XTP pyrophosphatase (184 aa).

Residue 8–13 (TGNKGK) participates in substrate binding. Residues glutamate 37 and aspartate 66 each contribute to the Mg(2+) site. Aspartate 66 (proton acceptor) is an active-site residue. Residues serine 67, 142–145 (FGYD), lysine 163, and 168–169 (HR) contribute to the substrate site.

It belongs to the HAM1 NTPase family. Homodimer. Mg(2+) serves as cofactor.

The enzyme catalyses XTP + H2O = XMP + diphosphate + H(+). It catalyses the reaction dITP + H2O = dIMP + diphosphate + H(+). The catalysed reaction is ITP + H2O = IMP + diphosphate + H(+). In terms of biological role, pyrophosphatase that catalyzes the hydrolysis of nucleoside triphosphates to their monophosphate derivatives, with a high preference for the non-canonical purine nucleotides XTP (xanthosine triphosphate), dITP (deoxyinosine triphosphate) and ITP. Seems to function as a house-cleaning enzyme that removes non-canonical purine nucleotides from the nucleotide pool, thus preventing their incorporation into DNA/RNA and avoiding chromosomal lesions. This chain is dITP/XTP pyrophosphatase, found in Methanosarcina mazei (strain ATCC BAA-159 / DSM 3647 / Goe1 / Go1 / JCM 11833 / OCM 88) (Methanosarcina frisia).